The primary structure comprises 264 residues: Thymidylate synthase (264 aa).

Residue Arg21 coordinates dUMP. His51 lines the (6R)-5,10-methylene-5,6,7,8-tetrahydrofolate pocket. DUMP is bound at residue 126-127 (RR). Catalysis depends on Cys146, which acts as the Nucleophile. DUMP-binding positions include 166–169 (RSAD), Asn177, and 207–209 (HLY). Position 169 (Asp169) interacts with (6R)-5,10-methylene-5,6,7,8-tetrahydrofolate. Ala263 provides a ligand contact to (6R)-5,10-methylene-5,6,7,8-tetrahydrofolate.

It belongs to the thymidylate synthase family. Bacterial-type ThyA subfamily. Homodimer.

It is found in the cytoplasm. It carries out the reaction dUMP + (6R)-5,10-methylene-5,6,7,8-tetrahydrofolate = 7,8-dihydrofolate + dTMP. The protein operates within pyrimidine metabolism; dTTP biosynthesis. Catalyzes the reductive methylation of 2'-deoxyuridine-5'-monophosphate (dUMP) to 2'-deoxythymidine-5'-monophosphate (dTMP) while utilizing 5,10-methylenetetrahydrofolate (mTHF) as the methyl donor and reductant in the reaction, yielding dihydrofolate (DHF) as a by-product. This enzymatic reaction provides an intracellular de novo source of dTMP, an essential precursor for DNA biosynthesis. The protein is Thymidylate synthase of Rhodopirellula baltica (strain DSM 10527 / NCIMB 13988 / SH1).